The primary structure comprises 501 residues: ATP synthase subunit alpha (501 aa).

Residue 169–176 (GDRQTGKT) coordinates ATP.

The protein belongs to the ATPase alpha/beta chains family. As to quaternary structure, F-type ATPases have 2 components, CF(1) - the catalytic core - and CF(0) - the membrane proton channel. CF(1) has five subunits: alpha(3), beta(3), gamma(1), delta(1), epsilon(1). CF(0) has three main subunits: a(1), b(2) and c(9-12). The alpha and beta chains form an alternating ring which encloses part of the gamma chain. CF(1) is attached to CF(0) by a central stalk formed by the gamma and epsilon chains, while a peripheral stalk is formed by the delta and b chains.

The protein localises to the cell membrane. It catalyses the reaction ATP + H2O + 4 H(+)(in) = ADP + phosphate + 5 H(+)(out). Functionally, produces ATP from ADP in the presence of a proton gradient across the membrane. The alpha chain is a regulatory subunit. The chain is ATP synthase subunit alpha from Streptococcus thermophilus (strain CNRZ 1066).